The chain runs to 259 residues: 3-deoxy-manno-octulosonate cytidylyltransferase (259 aa).

Belongs to the KdsB family.

The protein localises to the cytoplasm. The catalysed reaction is 3-deoxy-alpha-D-manno-oct-2-ulosonate + CTP = CMP-3-deoxy-beta-D-manno-octulosonate + diphosphate. The protein operates within nucleotide-sugar biosynthesis; CMP-3-deoxy-D-manno-octulosonate biosynthesis; CMP-3-deoxy-D-manno-octulosonate from 3-deoxy-D-manno-octulosonate and CTP: step 1/1. It functions in the pathway bacterial outer membrane biogenesis; lipopolysaccharide biosynthesis. Functionally, activates KDO (a required 8-carbon sugar) for incorporation into bacterial lipopolysaccharide in Gram-negative bacteria. The polypeptide is 3-deoxy-manno-octulosonate cytidylyltransferase (Xanthomonas oryzae pv. oryzae (strain KACC10331 / KXO85)).